The chain runs to 187 residues: Putative lipoprotein LppJ (187 aa).

An N-terminal signal peptide occupies residues 1–28 (MPHSTADRRLRLTRQALLAAAVVPLLAG). A lipid anchor (N-palmitoyl cysteine) is attached at C29. C29 is lipidated: S-diacylglycerol cysteine.

Its subcellular location is the cell membrane. The sequence is that of Putative lipoprotein LppJ (lppJ) from Mycobacterium tuberculosis (strain CDC 1551 / Oshkosh).